The primary structure comprises 182 residues: uncharacterized protein (182 aa).

Residues M1–A29 form the signal peptide. Residues W152–V174 traverse the membrane as a helical segment.

The protein localises to the membrane. This is an uncharacterized protein from Bacillus subtilis (strain 168).